The sequence spans 757 residues: DNA endonuclease RBBP8 (757 aa).

The interval 22 to 45 is essential for binding to the MRN complex and for RPA focus formation on DNA damage; it reads DLWTKLKEYHDKETQGLQVKVTKL. Residues 35-84 adopt a coiled-coil conformation; that stretch reads TQGLQVKVTKLKKERILDAQRLEEFFTKNQQLREQQKVLHETIKVLEDRL. Residues 45 to 160 are required for interaction with LMO4, probably by stabilizing the interaction through RPPB8 dimerization; the sequence is LKKERILDAQ…TDLESEEDVI (116 aa). Glycyl lysine isopeptide (Lys-Gly) (interchain with G-Cter in SUMO2) cross-links involve residues Lys-62 and Lys-115. Residues 117–138 are a coiled coil; sequence ITELMNEKNTLQEENKKLSEQL. Lys-193 is covalently cross-linked (Glycyl lysine isopeptide (Lys-Gly) (interchain with G-Cter in SUMO2)). A Phosphoserine modification is found at Ser-272. Thr-309 is subject to Phosphothreonine. Residues Ser-320, Ser-321, and Ser-343 each carry the phosphoserine modification. Positions 348–375 are disordered; that stretch reads GKKTHLKTVPLSNTSAPGPEKPRSKSED. Glycyl lysine isopeptide (Lys-Gly) (interchain with G-Cter in SUMO2) cross-links involve residues Lys-354 and Lys-372. A Phosphoserine modification is found at Ser-373. Residues Lys-390, Lys-399, and Lys-405 each participate in a glycyl lysine isopeptide (Lys-Gly) (interchain with G-Cter in SUMO2) cross-link. Positions 407–417 are enriched in polar residues; it reads TSEPISEQGNI. A disordered region spans residues 407-430; that stretch reads TSEPISEQGNIGHSKDTDRDKHVV. Basic and acidic residues predominate over residues 419-429; it reads HSKDTDRDKHV. Glycyl lysine isopeptide (Lys-Gly) (interchain with G-Cter in SUMO2) cross-links involve residues Lys-433 and Lys-443. The interval 484 to 488 is PXDLS motif; it reads PLDLS. The PXDLS motif motif lies at 484–488; it reads PLDLS. The tract at residues 503–551 is damage-recruitment motif; that stretch reads CENSKIRFRQVTLYEALKPIPRDSSSSRKALSGSCGLTKDSPEEPCLQE. Lys-520 is covalently cross-linked (Glycyl lysine isopeptide (Lys-Gly) (interchain with G-Cter in SUMO2); alternate). The disordered stretch occupies residues 524–544; that stretch reads RDSSSSRKALSGSCGLTKDSP. Residues Lys-564 and Lys-570 each participate in a glycyl lysine isopeptide (Lys-Gly) (interchain with G-Cter in SUMO2) cross-link. A Glycyl lysine isopeptide (Lys-Gly) (interchain with G-Cter in SUMO2); alternate cross-link involves residue Lys-596. Glycyl lysine isopeptide (Lys-Gly) (interchain with G-Cter in SUMO2) cross-links involve residues Lys-605, Lys-630, and Lys-632. A required for interaction with LMO4, probably by making physical contact with LMO4 region spans residues 633-677; that stretch reads SLQNNQDVSFENIQWSIDPGADLSQYKMGVTVDDTKDGSQSRLAG. The residue at position 656 (Ser-656) is a Phosphoserine; by ATM. Lys-668 is covalently cross-linked (Glycyl lysine isopeptide (Lys-Gly) (interchain with G-Cter in SUMO2)). Ser-671 carries the post-translational modification Phosphoserine. Residues 696 to 728 show a composition bias toward basic and acidic residues; the sequence is KKQEQKGEESPNGERKMNDSLEDMFDRTTHEEY. The tract at residues 696-757 is disordered; sequence KKQEQKGEES…TTTKKPNISW (62 aa). A Glycyl lysine isopeptide (Lys-Gly) (interchain with G-Cter in SUMO2) cross-link involves residue Lys-711. A Phosphoserine modification is found at Ser-715. Positions 747–757 are enriched in polar residues; the sequence is STTTKKPNISW.

It belongs to the COM1/SAE2/CtIP family. Homotetramer; formed by antiparallel association of helical extensions protruding from the N-termini of two parallel coiled-coil dimers. Forms a dumbbell-shaped particle in which polar globular domains are held about 30 nm apart by a central rod. Homotetramerization is required for DNA-end resection and repair. Interacts (via the PXDLS motif) with CTBP1; the interaction is disrupted via binding of the adenovirus E1A to CTBP1. Component of the BRCA1-RBBP8 complex. Interacts (the Ser-321 phosphorylated form) with BRCA1 (via the C-terminal BRCT domains): the interaction occurs in the G2 phase, ubiquitinates RBBP8 and involves RBBP8 in BRCA1-dependent G2/M checkpoint control on DNA damage. Interacts with RB1. Interacts with the MRN complex. Interacts directly with MRE11; the interaction is required for efficient homologous recombination (HR) and regulation of the MRN complex. Interacts directly with RAD50. Interacts (when phosphorylated by CDK1) with NBN; promoting association with the MRN complex. Interacts with LMO4 (via the LIM zinc-binding 1 domain). Interacts with SIAH1. Interacts with RNF138. Interacts with EXD2. Interacts with CUL3 and KLHL15; this interaction leads to RBBP8 proteasomal degradation. Directly interacts with PIN1; this interaction depends upon RBBP8 phosphorylation, predominantly at Thr-309. Interacts with FZR1; this interaction leads to APC/C-mediated RBBP8 proteasomal degradation. Interacts with AUNIP; leading to recruit RBBP8 to sites of DNA damage. Interacts with SAMHD1. Interacts with HDGFL2. Post-translationally, hyperphosphorylation upon ionizing radiation results in dissociation from BRCA1. Phosphorylation by CDK1 is essential for the recruitment to DNA and the DNA repair function. Phosphorylated on Ser-321 as cells enter G2 phase. This phosphorylation is required for binding BRCA1 and for the G2/M DNA damage transition checkpoint control. Phosphorylation at Thr-309, probably catalyzed by CDK2, is required for PIN1-binding, while phosphorylation at Ser-272 serves as a PIN1 isomerization site. Phosphorylation at Thr-309 is cell-cycle dependent. It steadily increases during S phase, peaks at late S/G2 phase, and drops at G1. Phosphorylation is not required for tetramerization. Binds to DNA more strongly when dephosphorylated. In terms of processing, ubiquitinated. Ubiquitination at multiple sites by BRCA1 (via its N-terminal RING domain) does not lead to its proteasomal degradation but instead the ubiquitinated RBBP8 binds to chromatin following DNA damage and may play a role in G2/M checkpoint control. Ubiquitinated by RNF138 at its N-terminus. Ubiquitinated through 'Lys-48' by the E3 CUL3-KLHL15 complex; this modification leads to proteasomal degradation. Ubiquitinated by the E3 FZR1/APC/C complex; this modification leads to proteasomal degradation.

The protein resides in the nucleus. The protein localises to the chromosome. Its function is as follows. Endonuclease that cooperates with the MRE11-RAD50-NBN (MRN) complex in DNA-end resection, the first step of double-strand break (DSB) repair through the homologous recombination (HR) pathway. HR is restricted to S and G2 phases of the cell cycle and preferentially repairs DSBs resulting from replication fork collapse. Key determinant of DSB repair pathway choice, as it commits cells to HR by preventing classical non-homologous end-joining (NHEJ). Specifically promotes the endonuclease activity of the MRN complex to clear DNA ends containing protein adducts: recruited to DSBs by NBN following phosphorylation by CDK1, and promotes the endonuclease activity of MRE11 to clear protein-DNA adducts and generate clean double-strand break ends. Functions downstream of the MRN complex and ATM, promotes ATR activation and its recruitment to DSBs in the S/G2 phase facilitating the generation of ssDNA. Component of the BRCA1-RBBP8 complex that regulates CHEK1 activation and controls cell cycle G2/M checkpoints on DNA damage. During immunoglobulin heavy chain class-switch recombination, promotes microhomology-mediated alternative end joining (A-NHEJ) and plays an essential role in chromosomal translocations. Binds preferentially to DNA Y-junctions and to DNA substrates with blocked ends and promotes intermolecular DNA bridging. The protein is DNA endonuclease RBBP8 (RBBP8) of Bos taurus (Bovine).